Reading from the N-terminus, the 344-residue chain is MVPAACMLLWALLLSLESRAAGAEDQKTNPTATTVRMQRVSFHFGGPARSLRSTNPTARTSISRKLRVTLEDENDALATADRLAVPAAAELLSTVTGYSRSSLSNSGDWEEDGSLEEGVVDTRKTTNNPITIFSTTNTVGSSSTTGRFVANSQEREIRLTTDMRSPSSKTTVDLSSETTLQQWSTPGSTPSPWPKPSLTAMPSPEDLRVVLMPWGPWHCHCKSGTMSRSRAGKLHGLSGRLRVGALNELRTEHRPCTYQLCTCNRQLEECPLDSSLCTDHSCSTHVASTISPIPVHLRRRPILPPTSPSPSPALAFWKRVRIGLEDIWNSLSSVFTETQPIERT.

A signal peptide spans 1–22 (MVPAACMLLWALLLSLESRAAG). The segment covering 162–182 (DMRSPSSKTTVDLSSETTLQQ) has biased composition (polar residues). Residues 162–197 (DMRSPSSKTTVDLSSETTLQQWSTPGSTPSPWPKPS) are disordered.

Phosphorylation sites are present in the extracellular medium.

The protein resides in the secreted. Functionally, involved in control of cellular proliferation. Onconcogenic modifier contributing to the tumor suppressor function of DNMT3B. This chain is Protein MENT (Ment), found in Rattus norvegicus (Rat).